A 178-amino-acid chain; its full sequence is Relaxin-like protein SQ10 (178 aa).

The signal sequence occupies residues methionine 1–glycine 20. 3 disulfide bridges follow: cysteine 34–cysteine 165, cysteine 46–cysteine 178, and cysteine 164–cysteine 169. A propeptide spans glutamate 54–serine 150 (connecting peptide).

It belongs to the insulin family. Heterodimer of a B chain and an A chain linked by two disulfide bonds.

It is found in the secreted. The chain is Relaxin-like protein SQ10 from Oryctolagus cuniculus (Rabbit).